The following is a 354-amino-acid chain: Probable L-ascorbate-6-phosphate lactonase UlaG (354 aa).

The protein belongs to the UlaG family. It depends on a divalent metal cation as a cofactor.

It is found in the cytoplasm. The enzyme catalyses L-ascorbate 6-phosphate + H2O = 3-dehydro-L-gulonate 6-phosphate. Its pathway is cofactor degradation; L-ascorbate degradation; D-xylulose 5-phosphate from L-ascorbate: step 1/4. In terms of biological role, probably catalyzes the hydrolysis of L-ascorbate-6-P into 3-keto-L-gulonate-6-P. Is essential for L-ascorbate utilization under anaerobic conditions. In Shigella flexneri, this protein is Probable L-ascorbate-6-phosphate lactonase UlaG.